A 383-amino-acid polypeptide reads, in one-letter code: uncharacterized protein (383 aa).

This sequence belongs to the peptidase M20 family.

This is an uncharacterized protein from Staphylococcus aureus (strain MRSA252).